We begin with the raw amino-acid sequence, 379 residues long: Early boundary activity protein 3 (379 aa).

In terms of assembly, the heterotrimeric Elba complex consists of Elba1, Elba2 and Elba3.

It is found in the nucleus. The heterotrimeric Elba complex is required for chromatin domain boundary function during early embryogenesis. It binds to a 8-bp sequence 5'-CCAATAAG-3' in the Fab-7 insulator or boundary element in the bithorax complex and contributes to its insulator or boundary activity. Elba3 lacks DNA-binding activity and plays the role of an adapter protein, bringing Elba1 and 2 together, thereby establishing a complex that recognizes the asymmetric sequence motif through the BEN domains of Elba1 and 2. This is Early boundary activity protein 3 from Drosophila melanogaster (Fruit fly).